A 452-amino-acid polypeptide reads, in one-letter code: Bis(5'-adenosyl)-triphosphatase enpp4 (452 aa).

The N-terminal stretch at 1 to 19 (MFGRVFIVAVLYCITICKG) is a signal peptide. The Extracellular segment spans residues 20–407 (EDPTNSSTPK…NQWCIQVSEA (388 aa)). A glycan (N-linked (GlcNAc...) asparagine) is linked at asparagine 24. Residues aspartate 36 and threonine 72 each coordinate Zn(2+). Residue threonine 72 is the AMP-threonine intermediate of the active site. Asparagine 93 contributes to the substrate binding site. A glycan (N-linked (GlcNAc...) asparagine) is linked at asparagine 107. Tyrosine 154 contacts substrate. Residues asparagine 155 and asparagine 175 are each glycosylated (N-linked (GlcNAc...) asparagine). Zn(2+) is bound by residues aspartate 189 and histidine 193. Residue aspartate 189 coordinates substrate. A glycan (N-linked (GlcNAc...) asparagine) is linked at asparagine 202. Zn(2+) contacts are provided by aspartate 237 and histidine 238. Cysteine 254 and cysteine 287 are oxidised to a cystine. Residues asparagine 259 and asparagine 327 are each glycosylated (N-linked (GlcNAc...) asparagine). Residue histidine 336 coordinates Zn(2+). The N-linked (GlcNAc...) asparagine glycan is linked to asparagine 386. Cysteine 394 and cysteine 401 are disulfide-bonded. Residues 408-428 (IGIVIGAIMVLTTLTCIIIML) form a helical membrane-spanning segment. Over 429–452 (KKKMPSARPFSRLQFQDDDDPLIG) the chain is Cytoplasmic.

It belongs to the nucleotide pyrophosphatase/phosphodiesterase family. Zn(2+) is required as a cofactor.

It localises to the cell membrane. The enzyme catalyses P(1),P(3)-bis(5'-adenosyl) triphosphate + H2O = AMP + ADP + 2 H(+). Its function is as follows. Hydrolyzes extracellular Ap3A into AMP and ADP, and Ap4A into AMP and ATP. Ap3A and Ap4A are diadenosine polyphosphates thought to induce proliferation of vascular smooth muscle cells. Acts as a procoagulant, mediating platelet aggregation at the site of nascent thrombus via release of ADP from Ap3A and activation of ADP receptors. In Xenopus laevis (African clawed frog), this protein is Bis(5'-adenosyl)-triphosphatase enpp4 (enpp4).